The primary structure comprises 91 residues: Potassium channel toxin Meg-beta-KTx1 (91 aa).

The signal sequence occupies residues 1–19 (MQRNLVVLLFLGMVALSSC). A propeptide spanning residues 20 to 27 (GLREKHFQ) is cleaved from the precursor. The BetaSPN-type CS-alpha/beta domain maps to 54–91 (QFGCPAYQGYCDDHCQDIKKQEGFCHGFKCKCGIPMGF). Disulfide bonds link Cys-57/Cys-78, Cys-64/Cys-83, and Cys-68/Cys-85.

The protein belongs to the long chain scorpion toxin family. Class 1 subfamily. As to expression, expressed by the venom gland.

Its subcellular location is the secreted. Inhibits voltage-gated potassium channel. This Mesobuthus gibbosus (Mediterranean checkered scorpion) protein is Potassium channel toxin Meg-beta-KTx1.